A 1183-amino-acid chain; its full sequence is Translation initiation factor IF-2 (1183 aa).

2 disordered regions span residues 55–512 (KSKT…KVHI) and 538–574 (ASLA…RQRR). Residues 83-99 (TQKDQKTEPKKKNHDQT) show a composition bias toward basic and acidic residues. Composition is skewed to polar residues over residues 100–143 (ELSQ…QITA) and 165–177 (KPLT…IPQS). The span at 220–229 (PKIDIQDKKP) shows a compositional bias: basic and acidic residues. Residues 231-252 (QPNNQKAKTRINQGEISPQKVG) are compositionally biased toward polar residues. Residues 253–267 (QGNIQKIKSQNKQNQ) are compositionally biased toward low complexity. The segment covering 288–304 (IRREKPVNKPHTNEVRN) has biased composition (basic and acidic residues). Polar residues-rich tracts occupy residues 324-349 (QGLS…NRQG) and 357-367 (NRTTQGQNRPG). Residues 485 to 499 (GRPDWDDSAKLDALR) are compositionally biased toward basic and acidic residues. Composition is skewed to basic residues over residues 544 to 553 (SKPKVGKRNN) and 560 to 574 (LKKR…RQRR). The 173-residue stretch at 675–847 (RRPPVVTVMG…VLLVTEVEDL (173 aa)) folds into the tr-type G domain. Residues 684–691 (GHVDHGKT) form a G1 region. A GTP-binding site is contributed by 684–691 (GHVDHGKT). The G2 stretch occupies residues 709-713 (GITQH). The G3 stretch occupies residues 734–737 (DTPG). GTP contacts are provided by residues 734–738 (DTPGH) and 788–791 (NKID). Residues 788-791 (NKID) are G4. A G5 region spans residues 824–826 (SAI).

The protein belongs to the TRAFAC class translation factor GTPase superfamily. Classic translation factor GTPase family. IF-2 subfamily.

Its subcellular location is the cytoplasm. Functionally, one of the essential components for the initiation of protein synthesis. Protects formylmethionyl-tRNA from spontaneous hydrolysis and promotes its binding to the 30S ribosomal subunits. Also involved in the hydrolysis of GTP during the formation of the 70S ribosomal complex. This is Translation initiation factor IF-2 from Prochlorococcus marinus (strain NATL1A).